Consider the following 670-residue polypeptide: Histone-lysine N-methyltransferase, H3 lysine-9 specific SUVH1 (670 aa).

Residues 53–140 are disordered; sequence YPFSSSQANQ…RPISRPENMN (88 aa). Low complexity predominate over residues 68-79; that stretch reads NQAQYPPQHQQP. Residues 123-133 are compositionally biased toward basic residues; it reads VKRRIPKKRPI. The YDG domain maps to 211–357; the sequence is GIVPGVEIGD…HNTFKYKLVR (147 aa). In terms of domain architecture, Pre-SET spans 432–492; that stretch reads FGCDCANLCK…TCKNKVTQMG (61 aa). Residues C434, C436, C440, C447, C449, C475, C479, C481, and C484 each coordinate Zn(2+). In terms of domain architecture, SET spans 495–639; the sequence is VRLEVFKTAN…PMTELTYDYG (145 aa). Residues 505–507, D541, Y543, R593, and 596–597 each bind S-adenosyl-L-methionine; these read RGW and NH. Zn(2+) contacts are provided by C599, C658, C660, and C665. The Post-SET domain occupies 654–670; sequence GKRKCFCGSAYCRGSFG.

It belongs to the class V-like SAM-binding methyltransferase superfamily. Histone-lysine methyltransferase family. Suvar3-9 subfamily. Expressed in leaves stems and flowers.

The protein localises to the nucleus. It is found in the chromosome. It localises to the centromere. The catalysed reaction is L-lysyl(9)-[histone H3] + 2 S-adenosyl-L-methionine = N(6),N(6)-dimethyl-L-lysyl(9)-[histone H3] + 2 S-adenosyl-L-homocysteine + 2 H(+). In terms of biological role, histone methyltransferase. Methylates 'Lys-9' of histone H3. H3 'Lys-9' methylation represents a specific tag for epigenetic transcriptional repression. The sequence is that of Histone-lysine N-methyltransferase, H3 lysine-9 specific SUVH1 (SUVH1) from Arabidopsis thaliana (Mouse-ear cress).